The chain runs to 408 residues: Peptidase T (408 aa).

Zn(2+) is bound at residue His-78. Residue Asp-80 is part of the active site. Zn(2+) is bound at residue Asp-141. Glu-175 (proton acceptor) is an active-site residue. Positions 176, 198, and 380 each coordinate Zn(2+).

This sequence belongs to the peptidase M20B family. The cofactor is Zn(2+).

The protein resides in the cytoplasm. It catalyses the reaction Release of the N-terminal residue from a tripeptide.. Cleaves the N-terminal amino acid of tripeptides. The chain is Peptidase T from Clostridium botulinum (strain Langeland / NCTC 10281 / Type F).